The sequence spans 427 residues: MAIELGLSRITKLLEHLGNPQNSLRVLHIAGTNGKGSVCTYLSSVLQQKSYQIGKFTTPHLVHVTDSITINNKPIPLERYQNIRLQLEALNKSHSLKCTEFELLTCTAFKYFYDVQCQWCVIEVGLGGRLDATNVIPGANKACCGITKISLDHESFLGNTLSEISKEKAGIITEGVPFTVIDGTNEASVINVVKERCKALGSELSVTDSQLNGNMIDTNSWGCFDLAKLPLNGEYQIFNLRVAMGMLDYLQMNELIDITKNEVSTRLAKVDWPGRLYRMDYRFDKVSNRTVPILMDGAHNGSAAVELVKYLRKEYGNQPLTFVMAVTHGKNLEPLLQPLLRPIDQVILTRFNNVEGMPWIHATDPEEIKDFILTQGYTKEIVIENDLHQVLPSLAHVSDEQRRPIVVCGSLYLCGELLRIHNSHLRN.

Residue 34–37 (GKGS) participates in ATP binding. Mg(2+) is bound by residues Glu-123 and His-153. The ATP site is built by Arg-275 and Asp-296.

The protein belongs to the folylpolyglutamate synthase family.

The protein localises to the cytoplasm. The catalysed reaction is 7,8-dihydropteroate + L-glutamate + ATP = 7,8-dihydrofolate + ADP + phosphate + H(+). Its pathway is cofactor biosynthesis; tetrahydrofolylpolyglutamate biosynthesis. Functionally, glutamate-adding enzyme which catalyzes the binding of the first glutamyl side chain to dihydropteroate. Leads to the de nove synthesis of tetrahydrofolate. The sequence is that of Dihydrofolate synthetase (FOL3) from Saccharomyces cerevisiae (strain ATCC 204508 / S288c) (Baker's yeast).